The following is a 313-amino-acid chain: Leucine zipper protein 4 (313 aa).

The tract at residues 1–119 (MASFRKLTLS…PLIEQEKCSD (119 aa)) is interaction with DDX39B/UAP56. Disordered stretches follow at residues 1–238 (MASF…QGDL) and 290–313 (QSGR…TITT). Positions 22-40 (KVNFLDMSLDDIIIYKELE) match the UAP56-binding motif (UBM); required for proper nuclear localization motif. The segment covering 34–60 (IIYKELEGTNAEEEKNKRQNHSKKESP) has biased composition (basic and acidic residues). The tract at residues 51 to 80 (RQNHSKKESPSRQQSKAHRHRHRRGYSRCR) is arg-rich; required for RNA-binding. Positions 65–77 (SKAHRHRHRRGYS) are enriched in basic residues. The span at 81 to 92 (SNSEEGNHDKKP) shows a compositional bias: basic and acidic residues. A compositionally biased stretch (polar residues) spans 126 to 141 (EKNQGQSEGNQHQSEG). Over residues 142 to 168 (NPDKSEESQGQPEENHHSERSRNHLER) the composition is skewed to basic and acidic residues. A compositionally biased stretch (polar residues) spans 169-179 (SLSQSDRSQGQ). Residues 178 to 236 (GQLKRHHPQYERSHGQYKRSHGQSERSHGHSERSHGHSERSHGHSERSHGHSKRSRSQG) form an RS-containing His-rich (RS-H); necessary for nuclear localization region. The span at 199–226 (GQSERSHGHSERSHGHSERSHGHSERSH) shows a compositional bias: basic and acidic residues. A Phosphoserine modification is found at serine 234. The segment at 238 to 287 (LVDTQSDLIATQRDLIATQKDLIATQRDLIATQRDLIVTQRDLVATERDL) is leucine-zipper; required for RNA-binding and for its relocalization to the cytoplasm during cell division. The tract at residues 241–313 (TQSDLIATQR…YSTGKNTITT (73 aa)) is interaction with NXF1. A compositionally biased stretch (polar residues) spans 304–313 (YSTGKNTITT).

Interacts with NXF1, NXF2, THOC1, THOC5, DDX39B/UAP56 and SRRT. In terms of tissue distribution, expressed specifically in testis. Also expressed in a wide variety of cancer types, but particularly high levels of expression observed in melanoma cells.

The protein localises to the nucleus. The protein resides in the cytoplasm. Export adapter involved in mRNA nuclear export in cancer cells. Binds and enhances the RNA-binding activity of the nuclear RNA export factor NXF1. Can restore mRNA export function in cells compromised by loss of mRNA export adapters. This Homo sapiens (Human) protein is Leucine zipper protein 4 (LUZP4).